A 246-amino-acid polypeptide reads, in one-letter code: NAD-dependent protein deacylase (246 aa).

Residues 1–245 (MKEFITKHRD…ELIREILDNP (245 aa)) form the Deacetylase sirtuin-type domain. Residue 20–39 (GAGISAESGIPTFRGSEGLW) coordinates NAD(+). Tyr-64 and Arg-67 together coordinate substrate. 98–101 (QNVD) is a binding site for NAD(+). Catalysis depends on His-116, which acts as the Proton acceptor. 4 residues coordinate Zn(2+): Cys-124, Cys-127, Cys-146, and Cys-149. NAD(+)-binding positions include 186–188 (GTS), 212–214 (NPE), and Thr-230.

Belongs to the sirtuin family. Class III subfamily. Zn(2+) serves as cofactor.

It localises to the cytoplasm. It catalyses the reaction N(6)-acetyl-L-lysyl-[protein] + NAD(+) + H2O = 2''-O-acetyl-ADP-D-ribose + nicotinamide + L-lysyl-[protein]. The enzyme catalyses N(6)-succinyl-L-lysyl-[protein] + NAD(+) + H2O = 2''-O-succinyl-ADP-D-ribose + nicotinamide + L-lysyl-[protein]. NAD-dependent lysine deacetylase and desuccinylase that specifically removes acetyl and succinyl groups on target proteins. Modulates the activities of several proteins which are inactive in their acylated form. The chain is NAD-dependent protein deacylase from Leptospira interrogans serogroup Icterohaemorrhagiae serovar copenhageni (strain Fiocruz L1-130).